A 246-amino-acid chain; its full sequence is Pyruvate formate-lyase 1-activating enzyme (246 aa).

Positions 16–239 constitute a Radical SAM core domain; the sequence is VDGPGIRFIT…MERVKGILEQ (224 aa). Positions 30, 34, and 37 each coordinate [4Fe-4S] cluster. S-adenosyl-L-methionine contacts are provided by residues 36–38, glycine 79, 130–132, and histidine 203; these read YCH and DLK.

This sequence belongs to the organic radical-activating enzymes family. [4Fe-4S] cluster is required as a cofactor.

It localises to the cytoplasm. The enzyme catalyses glycyl-[formate C-acetyltransferase] + reduced [flavodoxin] + S-adenosyl-L-methionine = glycin-2-yl radical-[formate C-acetyltransferase] + semiquinone [flavodoxin] + 5'-deoxyadenosine + L-methionine + H(+). In terms of biological role, activation of pyruvate formate-lyase 1 under anaerobic conditions by generation of an organic free radical, using S-adenosylmethionine and reduced flavodoxin as cosubstrates to produce 5'-deoxy-adenosine. The protein is Pyruvate formate-lyase 1-activating enzyme (pflA) of Escherichia coli O157:H7.